The following is an 833-amino-acid chain: Leucine--tRNA ligase (833 aa).

Positions 41–52 match the 'HIGH' region motif; it reads PYPSGAGLHVGH. The short motif at 610-614 is the 'KMSKS' region element; it reads KMSKS. Residue lysine 613 participates in ATP binding.

It belongs to the class-I aminoacyl-tRNA synthetase family.

Its subcellular location is the cytoplasm. It carries out the reaction tRNA(Leu) + L-leucine + ATP = L-leucyl-tRNA(Leu) + AMP + diphosphate. The sequence is that of Leucine--tRNA ligase from Streptococcus pneumoniae (strain CGSP14).